A 110-amino-acid chain; its full sequence is MTQAKQSIPALYDFIKERQANPVAGSYTDYLFTKGLDKILKKVGEESTEVIVAAKNPDDPAFILEVADLTYHVLVLMVERGITVDQIATELASREGKKSRLQERSKIEKY.

The protein belongs to the PRA-PH family.

It is found in the cytoplasm. It carries out the reaction 1-(5-phospho-beta-D-ribosyl)-ATP + H2O = 1-(5-phospho-beta-D-ribosyl)-5'-AMP + diphosphate + H(+). The protein operates within amino-acid biosynthesis; L-histidine biosynthesis; L-histidine from 5-phospho-alpha-D-ribose 1-diphosphate: step 2/9. The polypeptide is Phosphoribosyl-ATP pyrophosphatase (Lacticaseibacillus casei (strain BL23) (Lactobacillus casei)).